We begin with the raw amino-acid sequence, 190 residues long: Nuclear transcription factor Y subunit B-2 (190 aa).

A disordered region spans residues 1 to 30; the sequence is MGDSDRDSGGGQNGNNQNGQSSLSPREQDR. A DNA-binding region spans residues 32–38; it reads LPIANVS. The tract at residues 59 to 70 is subunit association domain (SAD); it reads MQECVSEFISFV. The interval 168-190 is disordered; the sequence is HMYGATGGGSDSGGGAASGRTRT. Over residues 172–184 the composition is skewed to gly residues; it reads ATGGGSDSGGGAA.

This sequence belongs to the NFYB/HAP3 subunit family. Heterotrimeric transcription factor composed of three components, NF-YA, NF-YB and NF-YC. NF-YB and NF-YC must interact and dimerize for NF-YA association and DNA binding. Binds directly with DPB3-1. Ubiquitous. Predominantly expressed in flowers and siliques.

Its subcellular location is the nucleus. Functionally, component of the NF-Y/HAP transcription factor complex. The NF-Y complex stimulates the transcription of various genes by recognizing and binding to a CCAAT motif in promoters. The polypeptide is Nuclear transcription factor Y subunit B-2 (Arabidopsis thaliana (Mouse-ear cress)).